A 202-amino-acid polypeptide reads, in one-letter code: 3-isopropylmalate dehydratase small subunit 1 (202 aa).

This sequence belongs to the LeuD family. LeuD type 1 subfamily. In terms of assembly, heterodimer of LeuC and LeuD.

The catalysed reaction is (2R,3S)-3-isopropylmalate = (2S)-2-isopropylmalate. Its pathway is amino-acid biosynthesis; L-leucine biosynthesis; L-leucine from 3-methyl-2-oxobutanoate: step 2/4. In terms of biological role, catalyzes the isomerization between 2-isopropylmalate and 3-isopropylmalate, via the formation of 2-isopropylmaleate. The sequence is that of 3-isopropylmalate dehydratase small subunit 1 from Bordetella pertussis (strain Tohama I / ATCC BAA-589 / NCTC 13251).